The sequence spans 438 residues: Glutamate--tRNA ligase 2 (438 aa).

The 'HIGH' region motif lies at 6-16; it reads PSPTGDMHTGN. Positions 231-235 match the 'KMSKS' region motif; that stretch reads KMSKR. Residue Lys-234 participates in ATP binding.

The protein belongs to the class-I aminoacyl-tRNA synthetase family. Glutamate--tRNA ligase type 1 subfamily. Monomer.

The protein localises to the cytoplasm. The catalysed reaction is tRNA(Glu) + L-glutamate + ATP = L-glutamyl-tRNA(Glu) + AMP + diphosphate. Its function is as follows. Catalyzes the attachment of glutamate to tRNA(Glu) in a two-step reaction: glutamate is first activated by ATP to form Glu-AMP and then transferred to the acceptor end of tRNA(Glu). The sequence is that of Glutamate--tRNA ligase 2 from Wolinella succinogenes (strain ATCC 29543 / DSM 1740 / CCUG 13145 / JCM 31913 / LMG 7466 / NCTC 11488 / FDC 602W) (Vibrio succinogenes).